Reading from the N-terminus, the 383-residue chain is Putative F-box protein At3g22650 (383 aa).

Residues 3–50 (SCERSLLPIDIIEEICCRIPVEYLTQFKLTCKQWFALLKDKRFIYKYL) enclose the F-box domain.

This chain is Putative F-box protein At3g22650, found in Arabidopsis thaliana (Mouse-ear cress).